A 313-amino-acid chain; its full sequence is Pyrimidine-specific ribonucleoside hydrolase RihB (313 aa).

The Proton acceptor role is filled by aspartate 11. The Ca(2+) site is built by aspartate 11, aspartate 16, and valine 124. 2 residues coordinate substrate: glutamine 227 and histidine 239. Aspartate 240 serves as a coordination point for Ca(2+).

This sequence belongs to the IUNH family. RihB subfamily. In terms of assembly, homotetramer. The cofactor is Ca(2+).

The enzyme catalyses a pyrimidine ribonucleoside + H2O = a pyrimidine nucleobase + D-ribose. In terms of biological role, hydrolyzes cytidine or uridine to ribose and cytosine or uracil, respectively. Has a clear preference for cytidine over uridine. Strictly specific for ribonucleosides. The protein is Pyrimidine-specific ribonucleoside hydrolase RihB of Escherichia coli (strain K12 / DH10B).